We begin with the raw amino-acid sequence, 411 residues long: Serine hydroxymethyltransferase (411 aa).

Residues leucine 119 and 123 to 125 contribute to the (6S)-5,6,7,8-tetrahydrofolate site; that span reads GHL. An N6-(pyridoxal phosphate)lysine modification is found at lysine 228. Residue 351–353 coordinates (6S)-5,6,7,8-tetrahydrofolate; it reads SPF.

Belongs to the SHMT family. As to quaternary structure, homodimer. Pyridoxal 5'-phosphate is required as a cofactor.

It is found in the cytoplasm. The catalysed reaction is (6R)-5,10-methylene-5,6,7,8-tetrahydrofolate + glycine + H2O = (6S)-5,6,7,8-tetrahydrofolate + L-serine. The protein operates within one-carbon metabolism; tetrahydrofolate interconversion. Its pathway is amino-acid biosynthesis; glycine biosynthesis; glycine from L-serine: step 1/1. In terms of biological role, catalyzes the reversible interconversion of serine and glycine with tetrahydrofolate (THF) serving as the one-carbon carrier. This reaction serves as the major source of one-carbon groups required for the biosynthesis of purines, thymidylate, methionine, and other important biomolecules. Also exhibits THF-independent aldolase activity toward beta-hydroxyamino acids, producing glycine and aldehydes, via a retro-aldol mechanism. The sequence is that of Serine hydroxymethyltransferase from Clostridium botulinum (strain Eklund 17B / Type B).